Here is a 395-residue protein sequence, read N- to C-terminus: Cation channel sperm-associated protein 3 (395 aa).

Over 1–48 (MSQHFHHNPVRVKSGSLFATASEALQARLSKIKRKDKECQAYFRKVIK) the chain is Cytoplasmic. Residues 49–71 (STFFQIVMITTVTTNSFLLVLGT) form a helical membrane-spanning segment. The Extracellular segment spans residues 72–80 (NYDIQFEFF). The chain crosses the membrane as a helical span at residues 81–107 (RTFEVSELFFVSVYVCEFLMKVYVDPI). A topological domain (cytoplasmic) is located at residue Thr108. The chain crosses the membrane as a helical span at residues 109 to 131 (YWKDGYNILDVIILIILTIPYLL). The Extracellular segment spans residues 132–143 (RKIKGNHSAYLH). Residues 144-160 (FADGIQSLRILKLISYS) traverse the membrane as a helical segment. At 161–168 (RGIRTLII) the chain is on the cytoplasmic side. The helical transmembrane segment at 169–195 (AVGETVYTVASVLTLLFLLMFVFAILG) threads the bilayer. The Extracellular portion of the chain corresponds to 196–216 (FCLFGVTDRGDLENWGNLASA). Positions 217–236 (FFTLFSLATVDGWTDLQEEL) form an intramembrane region, helical; Pore-forming. At 237-242 (DKRKFT) the chain is on the extracellular side. The helical transmembrane segment at 243–268 (VSRAFTILFILLASFIFLNMFVGVMI) threads the bilayer. Over 269–395 (MHTEDSMKKF…ESSSSLSGLS (127 aa)) the chain is Cytoplasmic.

It belongs to the cation channel sperm-associated (TC 1.A.1.19) family. In terms of assembly, component of the CatSper complex or CatSpermasome composed of the core pore-forming members CATSPER1, CATSPER2, CATSPER3 and CATSPER4 as well as auxiliary members CATSPERB, CATSPERG2, CATSPERD, CATSPERE, CATSPERZ, C2CD6/CATSPERT, SLCO6C1, TMEM249, TMEM262 and EFCAB9. HSPA1 may be an additional auxiliary complex member. The core complex members CATSPER1, CATSPER2, CATSPER3 and CATSPER4 form a heterotetrameric channel. The auxiliary CATSPERB, CATSPERG2, CATSPERD and CATSPERE subunits form a pavilion-like structure over the pore which stabilizes the complex through interactions with CATSPER4, CATSPER3, CATSPER1 and CATSPER2 respectively. SLCO6C1 interacts with CATSPERE and TMEM262/CATSPERH interacts with CATSPERB, further stabilizing the complex. C2CD6/CATSPERT interacts at least with CATSPERD and is required for targeting the CatSper complex in the flagellar membrane. As to expression, testis-specific.

Its subcellular location is the cell projection. It is found in the cilium. The protein localises to the flagellum membrane. It carries out the reaction Ca(2+)(in) = Ca(2+)(out). With respect to regulation, in contrast to the human ortholog, not activated by progesterone. Activated by intracellular alkalinization. In terms of biological role, pore-forming subunit of the CatSper complex, a sperm-specific voltage-gated calcium channel that plays a central role in sperm cell hyperactivation. Controls calcium entry to mediate the hyperactivated motility, a step needed for sperm motility which is essential late in the preparation of sperm for fertilization. The polypeptide is Cation channel sperm-associated protein 3 (Catsper3) (Mus musculus (Mouse)).